A 291-amino-acid polypeptide reads, in one-letter code: Protein US2 (291 aa).

At Gly2 the chain carries N-acetylglycine; by host; partial. Residues 251–270 (PEVPDEQPTSPGRGPQETDP) are disordered.

The protein belongs to the herpesviridae HHV-1 US2 protein family. In terms of assembly, interacts with host KRT18.

It is found in the host cytoplasm. Its subcellular location is the host nucleus. The protein is Protein US2 of Homo sapiens (Human).